The following is a 153-amino-acid chain: Large ribosomal subunit protein uL30 (153 aa).

Belongs to the universal ribosomal protein uL30 family. In terms of assembly, part of the 50S ribosomal subunit.

This is Large ribosomal subunit protein uL30 from Methanocella arvoryzae (strain DSM 22066 / NBRC 105507 / MRE50).